A 178-amino-acid chain; its full sequence is Peptide methionine sulfoxide reductase MsrA (178 aa).

C11 is an active-site residue.

It belongs to the MsrA Met sulfoxide reductase family.

It catalyses the reaction L-methionyl-[protein] + [thioredoxin]-disulfide + H2O = L-methionyl-(S)-S-oxide-[protein] + [thioredoxin]-dithiol. It carries out the reaction [thioredoxin]-disulfide + L-methionine + H2O = L-methionine (S)-S-oxide + [thioredoxin]-dithiol. In terms of biological role, has an important function as a repair enzyme for proteins that have been inactivated by oxidation. Catalyzes the reversible oxidation-reduction of methionine sulfoxide in proteins to methionine. This Natronomonas pharaonis (strain ATCC 35678 / DSM 2160 / CIP 103997 / JCM 8858 / NBRC 14720 / NCIMB 2260 / Gabara) (Halobacterium pharaonis) protein is Peptide methionine sulfoxide reductase MsrA.